A 542-amino-acid polypeptide reads, in one-letter code: GATA-type transcription factor sreA (542 aa).

A compositionally biased stretch (polar residues) spans 1 to 10 (MLTLRSSSDT). The tract at residues 1-172 (MLTLRSSSDT…SAQNASGCGS (172 aa)) is disordered. The span at 44–63 (ADLRPDSFDASRSPDGDKAS) shows a compositional bias: basic and acidic residues. Composition is skewed to low complexity over residues 75–117 (SSDQ…PKAS) and 148–168 (SSTS…QNAS). Positions 178-196 (CPGGGSCNGTGGAVGCDGC) are cystein-rich region (CRR). A compositionally biased stretch (low complexity) spans 210-223 (APSARQARASPSAQ). The tract at residues 210 to 248 (APSARQARASPSAQTSEEQAQSGLDALDSASQDASGMPK) is disordered. Residues 250-274 (CQNCGTTLTPLWRRDDQGNTICNAC) form a GATA-type zinc finger. The segment covering 289–300 (MKKTVIKRRKRV) has biased composition (basic residues). Disordered regions lie at residues 289 to 408 (MKKT…PATR) and 461 to 525 (SNAP…REAE). Polar residues-rich tracts occupy residues 311-320 (AGSSDNSSVS) and 369-387 (KPTQ…NHSP). Residues 396–407 (ESTSAESAPPAT) are compositionally biased toward low complexity. A compositionally biased stretch (polar residues) spans 464-483 (PARSQTQTQPQPGTRSYSPN). Positions 510–542 (DKVKAARRAQLQREAENMREALRAKERELASLK) form a coiled coil.

It localises to the nucleus. Functionally, GATA-type transcription repressor that regulates iron acquisition genes through specific binding the GATA sequence elements of target promoters. SreA targets include genes encoding a number of key iron-regulated factors such as the siderophore biosynthesis genes. Is dispensable for growth on keratin substrates. SreA represses the expression of hapX and the siderophore system during iron sufficient conditions by an iron-sensing mechanism, while hapX represses sreA and activates the siderophore system during iron-limiting conditions resulting in efficient iron uptake and inhibition of iron-consuming pathways. This chain is GATA-type transcription factor sreA, found in Arthroderma benhamiae (strain ATCC MYA-4681 / CBS 112371) (Trichophyton mentagrophytes).